A 319-amino-acid chain; its full sequence is Annexin A4 (319 aa).

Residue Ala2 is modified to N-acetylalanine. Thr7 is subject to Phosphothreonine. Phosphoserine is present on Ser12. 4 Annexin repeats span residues Phe14–Thr85, Pro86–Ala157, Ala169–Lys241, and Asn245–Gly316. An N6-acetyllysine mark is found at Lys213, Lys293, and Lys300.

The protein belongs to the annexin family.

It is found in the zymogen granule membrane. Functionally, calcium/phospholipid-binding protein which promotes membrane fusion and is involved in exocytosis. In Homo sapiens (Human), this protein is Annexin A4.